Reading from the N-terminus, the 1019-residue chain is Photoactivated adenylate cyclase subunit alpha-like protein 1224-5/1F (1019 aa).

Residues 55–148 enclose the BLUF 1 domain; it reads LRRLMYLSAS…GRMYGWWHLK (94 aa). The 129-residue stretch at 204–332 folds into the Guanylate cyclase 1 domain; the sequence is VVTVIYLVEF…DWINSASRIT (129 aa). Residues 467–559 form the BLUF 2 domain; it reads LITLTYISQA…GVYGSPLDMT (93 aa). One can recognise a Guanylate cyclase 2 domain in the interval 615–744; it reads VMLATAISSF…EVRARVLEVE (130 aa). Residues 825–863 are disordered; it reads NISCRGGNPPAGGIPTSPKVRPPGRTNSVSSYTPDPKQA.

The protein belongs to the adenylyl cyclase class-4/guanylyl cyclase family. Heterotetramer of two alpha and two beta subunits.

It localises to the cell projection. It is found in the cilium. The protein localises to the flagellum. The protein is Photoactivated adenylate cyclase subunit alpha-like protein 1224-5/1F of Euglena gracilis.